The following is a 425-amino-acid chain: Oxalate decarboxylase ARB_02208 (425 aa).

An N-terminal signal peptide occupies residues methionine 1–alanine 19. A Cupin type-1 1 domain is found at phenylalanine 73 to aspartate 236. The Mn(2+) site is built by histidine 116, histidine 118, glutamate 122, and histidine 161. 4 N-linked (GlcNAc...) asparagine glycosylation sites follow: asparagine 228, asparagine 247, asparagine 254, and asparagine 265. One can recognise a Cupin type-1 2 domain in the interval phenylalanine 270–aspartate 414. Mn(2+) contacts are provided by histidine 317, histidine 319, glutamate 324, and histidine 363. Residue asparagine 367 is glycosylated (N-linked (GlcNAc...) asparagine). Catalysis depends on glutamate 378, which acts as the Proton donor.

Requires Mn(2+) as cofactor.

It is found in the secreted. The enzyme catalyses oxalate + H(+) = formate + CO2. Converts oxalate to formate and CO(2) in an O(2)-dependent reaction. Can also catalyze minor side reactions: oxalate oxidation to produce H(2)O(2), and oxalate-dependent, H(2)O(2)-independent dye oxidations. The polypeptide is Oxalate decarboxylase ARB_02208 (Arthroderma benhamiae (strain ATCC MYA-4681 / CBS 112371) (Trichophyton mentagrophytes)).